Here is a 228-residue protein sequence, read N- to C-terminus: MMMSLFNTFESPYFLGFPLMIFIAILISLTMFIPDNNLLIKNQSSMLASTFLKTMTKEIFSPIKKSGHSWALLLMTTLMFIFLNNITGLLPYTFTVTSQLSLNMAMAIPLWLGTIIMGATSQPSHSLAHLLPEGTPMTLAPFLIVIESISIIIRPLALGVRLTANITAGHLLIHLVSLALINLTKSLPLLFLTFSVFILLLILELAVSFIQAYVFVMLVSLYLEENLI.

A run of 6 helical transmembrane segments spans residues 13-33 (YFLG…TMFI), 70-90 (WALL…TGLL), 100-120 (LSLN…MGAT), 140-160 (APFL…ALGV), 162-182 (LTAN…ALIN), and 190-210 (LFLT…VSFI).

The protein belongs to the ATPase A chain family. As to quaternary structure, component of the ATP synthase complex composed at least of ATP5F1A/subunit alpha, ATP5F1B/subunit beta, ATP5MC1/subunit c (homooctomer), MT-ATP6/subunit a, MT-ATP8/subunit 8, ATP5ME/subunit e, ATP5MF/subunit f, ATP5MG/subunit g, ATP5MK/subunit k, ATP5MJ/subunit j, ATP5F1C/subunit gamma, ATP5F1D/subunit delta, ATP5F1E/subunit epsilon, ATP5PF/subunit F6, ATP5PB/subunit b, ATP5PD/subunit d, ATP5PO/subunit OSCP. ATP synthase complex consists of a soluble F(1) head domain (subunits alpha(3) and beta(3)) - the catalytic core - and a membrane F(0) domain - the membrane proton channel (subunits c, a, 8, e, f, g, k and j). These two domains are linked by a central stalk (subunits gamma, delta, and epsilon) rotating inside the F1 region and a stationary peripheral stalk (subunits F6, b, d, and OSCP). Interacts with DNAJC30; interaction is direct.

Its subcellular location is the mitochondrion inner membrane. The enzyme catalyses H(+)(in) = H(+)(out). Subunit a, of the mitochondrial membrane ATP synthase complex (F(1)F(0) ATP synthase or Complex V) that produces ATP from ADP in the presence of a proton gradient across the membrane which is generated by electron transport complexes of the respiratory chain. ATP synthase complex consist of a soluble F(1) head domain - the catalytic core - and a membrane F(1) domain - the membrane proton channel. These two domains are linked by a central stalk rotating inside the F(1) region and a stationary peripheral stalk. During catalysis, ATP synthesis in the catalytic domain of F(1) is coupled via a rotary mechanism of the central stalk subunits to proton translocation. With the subunit c (ATP5MC1), forms the proton-conducting channel in the F(0) domain, that contains two crucial half-channels (inlet and outlet) that facilitate proton movement from the mitochondrial intermembrane space (IMS) into the matrix. Protons are taken up via the inlet half-channel and released through the outlet half-channel, following a Grotthuss mechanism. This chain is ATP synthase F(0) complex subunit a, found in Myxine glutinosa (Atlantic hagfish).